The chain runs to 412 residues: Proteasome-activating nucleotidase 2 (412 aa).

Positions 28-74 form a coiled coil; it reads LRQHFERMVDVNRELDQRLQNADDRHAELVDEVDQMKARNEALKTAS. ATP-binding positions include 196 to 201 and His-335; that span reads GTGKTM. The docks into pockets in the proteasome alpha-ring to cause gate opening stretch occupies residues 409 to 412; the sequence is DYQY.

This sequence belongs to the AAA ATPase family. As to quaternary structure, homohexamer. The hexameric complex has a two-ring architecture resembling a top hat that caps the 20S proteasome core at one or both ends. Upon ATP-binding, the C-terminus of PAN interacts with the alpha-rings of the proteasome core by binding to the intersubunit pockets.

It localises to the cytoplasm. In terms of biological role, ATPase which is responsible for recognizing, binding, unfolding and translocation of substrate proteins into the archaeal 20S proteasome core particle. Is essential for opening the gate of the 20S proteasome via an interaction with its C-terminus, thereby allowing substrate entry and access to the site of proteolysis. Thus, the C-termini of the proteasomal ATPase function like a 'key in a lock' to induce gate opening and therefore regulate proteolysis. Unfolding activity requires energy from ATP hydrolysis, whereas ATP binding alone promotes ATPase-20S proteasome association which triggers gate opening, and supports translocation of unfolded substrates. This Haloferax volcanii (strain ATCC 29605 / DSM 3757 / JCM 8879 / NBRC 14742 / NCIMB 2012 / VKM B-1768 / DS2) (Halobacterium volcanii) protein is Proteasome-activating nucleotidase 2.